We begin with the raw amino-acid sequence, 446 residues long: Exodeoxyribonuclease 7 large subunit (446 aa).

The protein belongs to the XseA family. Heterooligomer composed of large and small subunits.

It localises to the cytoplasm. It catalyses the reaction Exonucleolytic cleavage in either 5'- to 3'- or 3'- to 5'-direction to yield nucleoside 5'-phosphates.. Bidirectionally degrades single-stranded DNA into large acid-insoluble oligonucleotides, which are then degraded further into small acid-soluble oligonucleotides. This chain is Exodeoxyribonuclease 7 large subunit, found in Geotalea uraniireducens (strain Rf4) (Geobacter uraniireducens).